The sequence spans 208 residues: AN1-type zinc finger protein 6 (208 aa).

Residues 8-42 (SQVPMLCSTGCGFYGNPRTNGMCSVCYKEHLQRQN) form an A20-type zinc finger. Zn(2+) contacts are provided by cysteine 14, cysteine 18, cysteine 30, and cysteine 33. The disordered stretch occupies residues 41–110 (QNSSNGRISP…ASSQVDSTSV (70 aa)). Serine 49 bears the Phosphoserine mark. Residues 54–68 (SVTSLSESLPVQCTD) show a composition bias toward polar residues. Over residues 83–94 (SSVQPSPVSNQS) the composition is skewed to low complexity. Over residues 95 to 110 (LLSESVASSQVDSTSV) the composition is skewed to polar residues. The AN1-type zinc-finger motif lies at 143–189 (KQKKNRCFMCRKKVGLTGFECRCGNVYCGVHRYSDVHNCSYNYKADA). 8 residues coordinate Zn(2+): cysteine 149, cysteine 152, cysteine 163, cysteine 165, cysteine 170, histidine 173, histidine 179, and cysteine 181. Residue lysine 204 is modified to N6-acetyllysine.

As to quaternary structure, interacts with PKN1.

In Bos taurus (Bovine), this protein is AN1-type zinc finger protein 6 (ZFAND6).